Consider the following 151-residue polypeptide: Small ribosomal subunit protein uS13m (151 aa).

It belongs to the universal ribosomal protein uS13 family. Component of the mitochondrial small ribosomal subunit (mt-SSU). Mature yeast 74S mitochondrial ribosomes consist of a small (37S) and a large (54S) subunit. The 37S small subunit contains a 15S ribosomal RNA (15S mt-rRNA) and at least 32 different proteins. The 54S large subunit contains a 21S rRNA (21S mt-rRNA) and at least 45 different proteins.

It localises to the mitochondrion. Functionally, component of the mitochondrial ribosome (mitoribosome), a dedicated translation machinery responsible for the synthesis of mitochondrial genome-encoded proteins, including at least some of the essential transmembrane subunits of the mitochondrial respiratory chain. The mitoribosomes are attached to the mitochondrial inner membrane and translation products are cotranslationally integrated into the membrane. In Schizosaccharomyces pombe (strain 972 / ATCC 24843) (Fission yeast), this protein is Small ribosomal subunit protein uS13m (sws2).